The chain runs to 120 residues: Acyl carrier protein, mitochondrial (120 aa).

Residues 43–117 (KEITDRVIGV…ETISYLRKTP (75 aa)) enclose the Carrier domain. O-(pantetheine 4'-phosphoryl)serine is present on Ser77.

This sequence belongs to the acyl carrier protein (ACP) family. As to quaternary structure, complex I is composed of about 45 different subunits. In terms of processing, 4'-phosphopantetheine is transferred from CoA to a specific serine of apo-ACP by acpS. This modification is essential for activity because fatty acids are bound in thioester linkage to the sulfhydryl of the prosthetic group.

It localises to the mitochondrion. It functions in the pathway lipid metabolism; fatty acid biosynthesis. Carrier of the growing fatty acid chain in fatty acid biosynthesis. May be involved in the synthesis of very-long-chain fatty acids. Accessory and non-catalytic subunit of the mitochondrial membrane respiratory chain NADH dehydrogenase (Complex I), which functions in the transfer of electrons from NADH to the respiratory chain. This Dictyostelium discoideum (Social amoeba) protein is Acyl carrier protein, mitochondrial (ndufab1).